The primary structure comprises 74 residues: uncharacterized protein (74 aa).

2 helical membrane-spanning segments follow: residues 3 to 23 and 35 to 55; these read YSALIPLFILLISLVLFCFSF and ILFFAYCIDFLALILAVMLLT.

Its subcellular location is the cell membrane. This is an uncharacterized protein from Mycoplasma genitalium (strain ATCC 33530 / DSM 19775 / NCTC 10195 / G37) (Mycoplasmoides genitalium).